The chain runs to 396 residues: THAP domain-containing protein 5 (396 aa).

The segment at 2-85 (MPRYCAAICC…LKQTAVPTIF (84 aa)) adopts a THAP-type zinc-finger fold. The interval 86-113 (SLPEDNQGKDPSKKKSQKKNLEDEKEVC) is disordered. The segment covering 91 to 113 (NQGKDPSKKKSQKKNLEDEKEVC) has biased composition (basic and acidic residues). The HCFC1-binding motif (HBM) signature appears at 322 to 325 (EHSY). The stretch at 349 to 382 (LELKEQQTLGRLKSLEALVRQLKQENWLSEENVK) forms a coiled coil.

Interacts with HTRA2; under apoptotic conditions. Interacts with ABRAXAS2. In terms of processing, cleaved by HTRA2 during apoptosis.

The protein localises to the nucleus. Its function is as follows. Has sequence-specific DNA-binding activity and can function as transcriptional repressor (in vitro). May be a regulator of cell cycle: THAP5 overexpression in human cell lines causes cell cycle arrest at G2/M phase. The polypeptide is THAP domain-containing protein 5 (THAP5) (Macaca fascicularis (Crab-eating macaque)).